We begin with the raw amino-acid sequence, 828 residues long: Periplasmic nitrate reductase (828 aa).

The tat-type signal signal peptide spans Met1 to Ala31. A 4Fe-4S Mo/W bis-MGD-type domain is found at Ile39–Asp95. Residues Cys46, Cys49, Cys53, and Cys81 each coordinate [4Fe-4S] cluster. Residues Lys83, Gln150, Asn175, Cys179, Trp212–Met219, Ser243–His247, Gln262–Asp264, Met372, Gln376, Asn482, Ser508–Asp509, Lys531, Asp558, and Thr718–Thr727 each bind Mo-bis(molybdopterin guanine dinucleotide). Phe794 provides a ligand contact to substrate. Positions 802 and 819 each coordinate Mo-bis(molybdopterin guanine dinucleotide).

This sequence belongs to the prokaryotic molybdopterin-containing oxidoreductase family. NasA/NapA/NarB subfamily. Component of the periplasmic nitrate reductase NapAB complex composed of NapA and NapB. Requires [4Fe-4S] cluster as cofactor. Mo-bis(molybdopterin guanine dinucleotide) serves as cofactor. Predicted to be exported by the Tat system. The position of the signal peptide cleavage has not been experimentally proven.

It is found in the periplasm. The enzyme catalyses 2 Fe(II)-[cytochrome] + nitrate + 2 H(+) = 2 Fe(III)-[cytochrome] + nitrite + H2O. Its function is as follows. Catalytic subunit of the periplasmic nitrate reductase complex NapAB. Receives electrons from NapB and catalyzes the reduction of nitrate to nitrite. This Salmonella dublin (strain CT_02021853) protein is Periplasmic nitrate reductase.